A 115-amino-acid polypeptide reads, in one-letter code: DNA-directed RNA polymerase II subunit RPB11-b2 (115 aa).

It belongs to the archaeal Rpo11/eukaryotic RPB11/RPC19 RNA polymerase subunit family. Component of the RNA polymerase II (Pol II) complex consisting of 12 subunits.

It localises to the nucleus. Functionally, DNA-dependent RNA polymerase catalyzes the transcription of DNA into RNA using the four ribonucleoside triphosphates as substrates. Component of RNA polymerase II which synthesizes mRNA precursors and many functional non-coding RNAs. Pol II is the central component of the basal RNA polymerase II transcription machinery. It is composed of mobile elements that move relative to each other. RPB11 is part of the core element with the central large cleft. The polypeptide is DNA-directed RNA polymerase II subunit RPB11-b2 (POLR2J3) (Homo sapiens (Human)).